Consider the following 518-residue polypeptide: Light-independent protochlorophyllide reductase subunit B (518 aa).

Asp36 provides a ligand contact to [4Fe-4S] cluster. Catalysis depends on Asp299, which acts as the Proton donor. 434-435 (GM) lines the substrate pocket.

It belongs to the ChlB/BchB/BchZ family. Protochlorophyllide reductase is composed of three subunits; ChlL, ChlN and ChlB. Forms a heterotetramer of two ChlB and two ChlN subunits. It depends on [4Fe-4S] cluster as a cofactor.

It localises to the plastid. The protein resides in the chloroplast. The enzyme catalyses chlorophyllide a + oxidized 2[4Fe-4S]-[ferredoxin] + 2 ADP + 2 phosphate = protochlorophyllide a + reduced 2[4Fe-4S]-[ferredoxin] + 2 ATP + 2 H2O. It functions in the pathway porphyrin-containing compound metabolism; chlorophyll biosynthesis (light-independent). Its function is as follows. Component of the dark-operative protochlorophyllide reductase (DPOR) that uses Mg-ATP and reduced ferredoxin to reduce ring D of protochlorophyllide (Pchlide) to form chlorophyllide a (Chlide). This reaction is light-independent. The NB-protein (ChlN-ChlB) is the catalytic component of the complex. This chain is Light-independent protochlorophyllide reductase subunit B, found in Adiantum capillus-veneris (Maidenhair fern).